The primary structure comprises 83 residues: Gene 41 protein (83 aa).

This chain is Gene 41 protein (41), found in Mycobacterium phage L5 (Mycobacteriophage L5).